A 232-amino-acid polypeptide reads, in one-letter code: Putative N-acetylmannosamine-6-phosphate 2-epimerase (232 aa).

The protein belongs to the NanE family.

The enzyme catalyses an N-acyl-D-glucosamine 6-phosphate = an N-acyl-D-mannosamine 6-phosphate. It functions in the pathway amino-sugar metabolism; N-acetylneuraminate degradation; D-fructose 6-phosphate from N-acetylneuraminate: step 3/5. In terms of biological role, converts N-acetylmannosamine-6-phosphate (ManNAc-6-P) to N-acetylglucosamine-6-phosphate (GlcNAc-6-P). This Borreliella burgdorferi (strain ZS7) (Borrelia burgdorferi) protein is Putative N-acetylmannosamine-6-phosphate 2-epimerase.